The primary structure comprises 98 residues: NADH-ubiquinone oxidoreductase chain 4L (98 aa).

The next 3 helical transmembrane spans lie at 2-22, 29-49, and 61-81; these read PSIF…TLVF, SLLC…LIIL, and ILLL…LVMV.

This sequence belongs to the complex I subunit 4L family. In terms of assembly, core subunit of respiratory chain NADH dehydrogenase (Complex I) which is composed of 45 different subunits.

It is found in the mitochondrion inner membrane. It catalyses the reaction a ubiquinone + NADH + 5 H(+)(in) = a ubiquinol + NAD(+) + 4 H(+)(out). Core subunit of the mitochondrial membrane respiratory chain NADH dehydrogenase (Complex I) which catalyzes electron transfer from NADH through the respiratory chain, using ubiquinone as an electron acceptor. Part of the enzyme membrane arm which is embedded in the lipid bilayer and involved in proton translocation. The polypeptide is NADH-ubiquinone oxidoreductase chain 4L (MT-ND4L) (Propithecus diadema diadema (Diademed sifaka)).